Here is a 349-residue protein sequence, read N- to C-terminus: sn-glycerol-3-phosphate import ATP-binding protein UgpC (349 aa).

Residues 4–235 (VTLTAVRKVY…PASTFVASFM (232 aa)) form the ABC transporter domain. 37-44 (GPSGCGKS) serves as a coordination point for ATP.

Belongs to the ABC transporter superfamily. sn-glycerol-3-phosphate importer (TC 3.A.1.1.3) family. The complex is composed of two ATP-binding proteins (UgpC), two transmembrane proteins (UgpA and UgpE) and a solute-binding protein (UgpB).

The protein resides in the cell inner membrane. It catalyses the reaction sn-glycerol 3-phosphate(out) + ATP + H2O = sn-glycerol 3-phosphate(in) + ADP + phosphate + H(+). Part of the ABC transporter complex UgpBAEC involved in sn-glycerol-3-phosphate (G3P) import. Responsible for energy coupling to the transport system. This Jannaschia sp. (strain CCS1) protein is sn-glycerol-3-phosphate import ATP-binding protein UgpC.